Consider the following 499-residue polypeptide: Glycerol kinase (499 aa).

An ADP-binding site is contributed by Thr15. Thr15, Thr16, and Ser17 together coordinate ATP. Sn-glycerol 3-phosphate is bound at residue Thr15. Arg19 serves as a coordination point for ADP. Residues Arg85, Glu86, Tyr137, and Asp246 each contribute to the sn-glycerol 3-phosphate site. The glycerol site is built by Arg85, Glu86, Tyr137, Asp246, and Gln247. Thr268 and Gly311 together coordinate ADP. Residues Thr268, Gly311, Gln315, and Gly412 each coordinate ATP. 2 residues coordinate ADP: Gly412 and Asn416.

This sequence belongs to the FGGY kinase family.

The catalysed reaction is glycerol + ATP = sn-glycerol 3-phosphate + ADP + H(+). It functions in the pathway polyol metabolism; glycerol degradation via glycerol kinase pathway; sn-glycerol 3-phosphate from glycerol: step 1/1. With respect to regulation, inhibited by fructose 1,6-bisphosphate (FBP). Key enzyme in the regulation of glycerol uptake and metabolism. Catalyzes the phosphorylation of glycerol to yield sn-glycerol 3-phosphate. The protein is Glycerol kinase of Parabacteroides distasonis (strain ATCC 8503 / DSM 20701 / CIP 104284 / JCM 5825 / NCTC 11152).